We begin with the raw amino-acid sequence, 504 residues long: Acetyltransferase pyiB (504 aa).

The N-terminal stretch at 1–18 (MGFLSAGGLWASLFRARI) is a signal peptide. A glycan (N-linked (GlcNAc...) asparagine) is linked at Asn-84. Residue His-181 is the Proton acceptor of the active site. N-linked (GlcNAc...) asparagine glycans are attached at residues Asn-413 and Asn-467.

It belongs to the plant acyltransferase family.

The protein operates within mycotoxin biosynthesis. Functionally, acetyltransferase; part of the gene cluster that mediates the biosynthesis of the mycotoxin pyrichalasin H, a tyrosine-derived cytochalasan that inhibits the growth of rice seedlings, but also inhibits lymphocyte capping and actin polymerization and alters cell morphology. Pyrichalasin H is indicated as the responsible agent for the genus-specific pathogenicity of M.grisea toward crabgrass. The first step in the pathway is catalyzed by the O-methyltransferase pyiA which methylates free tyrosine to generate the precursor O-methyltyrosine. The hybrid PKS-NRPS pyiS, assisted by the enoyl reductase pyiC, are responsible for fusion of the O-methyltyrosine precursor and the polyketide backbone. The polyketide synthase module (PKS) of pyiS is responsible for the synthesis of the polyketide backbone and the downstream nonribosomal peptide synthetase (NRPS) amidates the carboxyl end of the polyketide with the O-methyltyrosine precursor. As the NRPS A-domain demonstrates substrate tolerance, pyiS can also use phenylalanine, tyrosine and even para-chlorophenylalanine as amino acid precursor, which leads to the production of novel cytochalasans, including halogenated cytochalasans. Because pyiS lacks a designated enoylreductase (ER) domain, the required activity is provided the enoyl reductase pyiC. Reduction by the hydrolyase pyiE leads to 1,5-dihydropyrrolone, which is substrate for dehydration and intra-molecular Diels-Alder cyclization by the Diels-Alderase pyiF to yield the required isoindolone-fused macrocycle. The tailoring cytochrome P450 monooxygenases piyD and piyG catalyze the hydroxylation at C-18 and C-7, respectivily, whereas the short-chain dehydrogenase/reductase pyiH reduces the carbonyl at C-21 in preparation for the transfer of an acetyl group by the acetyltransferase pyiB. These 3 reactions whose order is not clear yet, lead to the production of O-methylpyrichalasin J, a deacetylated pyrichalasin H. Finally, pyiB to converts O-methylpyrichalasin J into the final product pyrichalasin H via acetylation of C-21. The polypeptide is Acetyltransferase pyiB (Pyricularia grisea (Crabgrass-specific blast fungus)).